The following is a 210-amino-acid chain: RNA chaperone ProQ (210 aa).

The segment at 118–146 (KAAKPEKKRPARRVAAKGQHAKETTTNKA) is disordered. A compositionally biased stretch (basic residues) spans 123 to 132 (EKKRPARRVA).

It belongs to the ProQ family.

Its subcellular location is the cytoplasm. RNA chaperone with significant RNA binding, RNA strand exchange and RNA duplexing activities. This is RNA chaperone ProQ from Pasteurella multocida (strain Pm70).